We begin with the raw amino-acid sequence, 374 residues long: Glutamate 5-kinase (374 aa).

Lysine 16 provides a ligand contact to ATP. Residues serine 56, aspartate 143, and asparagine 155 each contribute to the substrate site. 175–176 (TD) is a binding site for ATP. Positions 282-360 (KGCFVVDEGA…TRIEEILGYV (79 aa)) constitute a PUA domain.

It belongs to the glutamate 5-kinase family.

Its subcellular location is the cytoplasm. It catalyses the reaction L-glutamate + ATP = L-glutamyl 5-phosphate + ADP. The protein operates within amino-acid biosynthesis; L-proline biosynthesis; L-glutamate 5-semialdehyde from L-glutamate: step 1/2. Catalyzes the transfer of a phosphate group to glutamate to form L-glutamate 5-phosphate. The sequence is that of Glutamate 5-kinase from Methylococcus capsulatus (strain ATCC 33009 / NCIMB 11132 / Bath).